Here is a 71-residue protein sequence, read N- to C-terminus: Large ribosomal subunit protein bL31 (71 aa).

Zn(2+) is bound by residues Cys16, Cys18, Cys36, and Cys39.

This sequence belongs to the bacterial ribosomal protein bL31 family. Type A subfamily. As to quaternary structure, part of the 50S ribosomal subunit. The cofactor is Zn(2+).

Binds the 23S rRNA. This is Large ribosomal subunit protein bL31 from Syntrophus aciditrophicus (strain SB).